The primary structure comprises 298 residues: Thymidylate synthase (298 aa).

DUMP-binding positions include R25 and 159-160 (RR). C179 serves as the catalytic Nucleophile. DUMP-binding positions include 200-203 (RSCD), N211, and 241-243 (HLY). D203 provides a ligand contact to (6R)-5,10-methylene-5,6,7,8-tetrahydrofolate. Residue A297 coordinates (6R)-5,10-methylene-5,6,7,8-tetrahydrofolate.

This sequence belongs to the thymidylate synthase family. Bacterial-type ThyA subfamily. Homodimer.

It is found in the cytoplasm. The enzyme catalyses dUMP + (6R)-5,10-methylene-5,6,7,8-tetrahydrofolate = 7,8-dihydrofolate + dTMP. Its pathway is pyrimidine metabolism; dTTP biosynthesis. Functionally, catalyzes the reductive methylation of 2'-deoxyuridine-5'-monophosphate (dUMP) to 2'-deoxythymidine-5'-monophosphate (dTMP) while utilizing 5,10-methylenetetrahydrofolate (mTHF) as the methyl donor and reductant in the reaction, yielding dihydrofolate (DHF) as a by-product. This enzymatic reaction provides an intracellular de novo source of dTMP, an essential precursor for DNA biosynthesis. The protein is Thymidylate synthase of Rhodopseudomonas palustris (strain BisA53).